Reading from the N-terminus, the 242-residue chain is Myb-related protein MYBAS2 (242 aa).

HTH myb-type domains lie at 5-61 (REEI…HPGL) and 62-112 (KRGR…RKKA). Residues 33–57 (WDFIAKVSGLNRTGKSCRLRWVNYL) constitute a DNA-binding region (H-T-H motif). Residues 62–65 (KRGR) carry the Bipartite nuclear localization signal 1 motif. The segment at residues 85–108 (WSRIARRLPGRTDNEIKNYWRTHM) is a DNA-binding region (H-T-H motif). A Bipartite nuclear localization signal 2 motif is present at residues 109–117 (RKKAQERKS). The disordered stretch occupies residues 110-133 (KKAQERKSNMSPSSSSSSLTYQSC). Residues 118 to 133 (NMSPSSSSSSLTYQSC) are compositionally biased toward low complexity.

The protein localises to the nucleus. Functionally, transcription factor. The polypeptide is Myb-related protein MYBAS2 (MYBAS2) (Oryza sativa subsp. japonica (Rice)).